The chain runs to 173 residues: Photosystem I assembly protein Ycf3 (173 aa).

TPR repeat units lie at residues 35-68, 72-105, and 120-153; these read AYIY…EENA, GETL…NPKQ, and GRAL…YPGG.

It belongs to the Ycf3 family.

The protein localises to the cellular thylakoid membrane. In terms of biological role, essential for the assembly of the photosystem I (PSI) complex. May act as a chaperone-like factor to guide the assembly of the PSI subunits. The polypeptide is Photosystem I assembly protein Ycf3 (Prochlorococcus marinus (strain SARG / CCMP1375 / SS120)).